The chain runs to 278 residues: MDVRQSIHSAHAKTLDTQGLRNEFLVEKVFVADEYTMVYSHIDRIIVGGIMPITKTVSVGGEVGKQLGVSYFLERRELGVINIGGAGTITVDGQCYEIGHRDALYVGKGAKEVVFASIDTGTPAKFYYNCAPAHTTYPTKKVTPDEVSPVTLGDNLTSNRRTINKYFVPDVLETCQLSMGLTELAPGNLWNTMPCHTHERRMEVYFYFNMDDDACVFHMMGQPQETRHIVMHNEQAVISPSWSIHSGVGTKAYTFIWGMVGENQVFDDMDHVAVKDLR.

Residues His-196, His-198, Glu-203, and His-245 each contribute to the Zn(2+) site.

Belongs to the KduI family. As to quaternary structure, homohexamer. Requires Zn(2+) as cofactor.

The catalysed reaction is 5-dehydro-4-deoxy-D-glucuronate = 3-deoxy-D-glycero-2,5-hexodiulosonate. It participates in glycan metabolism; pectin degradation; 2-dehydro-3-deoxy-D-gluconate from pectin: step 4/5. Its function is as follows. Catalyzes the isomerization of 5-dehydro-4-deoxy-D-glucuronate to 3-deoxy-D-glycero-2,5-hexodiulosonate. The sequence is that of 4-deoxy-L-threo-5-hexosulose-uronate ketol-isomerase from Escherichia coli (strain K12 / MC4100 / BW2952).